We begin with the raw amino-acid sequence, 187 residues long: Nodulin-related protein 1 (187 aa).

Met-1 carries the N-acetylmethionine modification. Disordered regions lie at residues 1 to 66 (MDFF…ATNA) and 132 to 176 (YETS…HGFG). The segment covering 7–48 (QVKKKFSDKKPESSDPEPNHNKNKPGHTEPTTHKPGHGEPTT) has biased composition (basic and acidic residues). The segment covering 142-158 (GGTGSHGNVGGHGGGAG) has biased composition (gly residues).

Interacts with RPS2. In terms of tissue distribution, expressed in roots, leaves, flowers and siliques.

Functionally, prevents accumulation of abscisic acid (ABA) after heat treatment, thus reducing thermotolerance. May be a negative regulator of the ABA signaling/synthesis pathway. Required for defense responses against avirulent bacteria such as P.syringae pv. tomato DC3000 (avrRpt2). The sequence is that of Nodulin-related protein 1 from Arabidopsis thaliana (Mouse-ear cress).